The sequence spans 1533 residues: Actin cytoskeleton-regulatory complex protein pan-1 (1533 aa).

The disordered stretch occupies residues 1–204; that stretch reads MYSNSNAFLG…PPPPVKPQAT (204 aa). Composition is skewed to low complexity over residues 19–46, 53–136, 143–170, and 177–193; these read QQPQ…QPTG, GFAP…FQTG, IPQQ…QPQP, and QIQA…QGGI. In terms of domain architecture, EH 1 spans 244–333; sequence DQARFETLFK…DHIKNEVSSM (90 aa). The region spanning 277–312 is the EF-hand 1 domain; sequence LDGDSLSQIWTLADTTRSGQLHFPEFALAMYLCNLK. Residues 345-359 are compositionally biased toward low complexity; that stretch reads AGSSSAPASNAPSFA. Disordered regions lie at residues 345–378 and 393–423; these read AGSS…PQPS and QQTG…GYAG. Composition is skewed to polar residues over residues 360–378 and 393–410; these read TQQN…PQPS and QQTG…QQTG. The EH 2 domain maps to 513-602; it reads EKTRYDALFR…PELVPPSARN (90 aa). Positions 546–581 constitute an EF-hand 2 domain; it reads LDKPDLERIWTLADNGNKGRLDLDEFAVAMHLIYRK. Over residues 649–664 the composition is skewed to basic and acidic residues; sequence NRKDATVFKNNDEEVG. Disordered regions lie at residues 649-691, 894-917, 935-1306, and 1334-1533; these read NRKD…GDDL, IEDS…WEDA, SRAA…STNP, and DAIS…RVLD. Positions 690–890 form a coiled coil; it reads DLTIEQLRKK…RDVEDSVREF (201 aa). Composition is skewed to basic and acidic residues over residues 894 to 916 and 935 to 947; these read IEDS…RWED and SRAA…DRQG. The span at 968–982 shows a compositional bias: low complexity; it reads TPSPSISRTSTPAST. A coiled-coil region spans residues 1026–1209; that stretch reads ETAAQRAERE…KQLEAIDDED (184 aa). 3 stretches are compositionally biased toward basic and acidic residues: residues 1031–1063, 1090–1164, and 1173–1203; these read RAER…KLAE, GKAD…EEEK, and EAKE…KQLE. Over residues 1204–1218 the composition is skewed to acidic residues; the sequence is AIDDEDSSSSDEEGP. The segment covering 1221–1237 has biased composition (polar residues); the sequence is ITPQASTPTVGGSQVGT. Residues 1279-1293 show a composition bias toward low complexity; that stretch reads SQSSEASTSSVAAPV. Residues 1348–1367 are compositionally biased toward acidic residues; that stretch reads DDDDDDWGSEKGSDDEDSDD. Residues 1412-1495 are compositionally biased toward pro residues; it reads SSPPPPPAPV…PPPGGAPAPS (84 aa). The WH2 domain maps to 1500 to 1517; it reads RPAGLLGEIQAGRALKKT.

The protein belongs to the PAN1 family. As to quaternary structure, component of the PAN1 actin cytoskeleton-regulatory complex.

The protein localises to the cell membrane. The protein resides in the endosome membrane. It is found in the cytoplasm. Its subcellular location is the cytoskeleton. It localises to the actin patch. Component of the PAN1 actin cytoskeleton-regulatory complex required for the internalization of endosomes during actin-coupled endocytosis. The complex links the site of endocytosis to the cell membrane-associated actin cytoskeleton. Mediates uptake of external molecules and vacuolar degradation of plasma membrane proteins. Plays a role in the proper organization of the cell membrane-associated actin cytoskeleton and promotes its destabilization. The polypeptide is Actin cytoskeleton-regulatory complex protein pan-1 (pan-1) (Neurospora crassa (strain ATCC 24698 / 74-OR23-1A / CBS 708.71 / DSM 1257 / FGSC 987)).